The chain runs to 808 residues: MANAERVITRVHSQRERLDATLVAQKNEVFALLSRVEAKGKGILQHHQIIAEFEAMPLETQKKLKGGAFFEFLRSAQEAIVLPPFVALAVRPRPGVWEYVRVNLHDLVVEELQASEYLQFKEELVDGIKNGNFTLELDFEPFNAAFPRPTLNKYIGDGVEFLNRHLSAKLFHDKESLHPLLKFLRLHSHEGKTLMLNNRIQNLNTLQHNLRKAEEYLMELKPETLYSEFEHKFQEIGLERGWGDTAERVLNMIRLLLDLLEAPDPCTLENFLGRIPMVFNVVILSPHGYFAQDNVLGYPDTGGQVVYILDQVRALETEMLQRIKQQGLNITPRILIITRLLPDAAGTTCGQRLEKVYGSQYCDILRVPFRTEKGIVRKWISRFEVWPYLETFTEDVAAEISKELQGKPDLIIGNYSDGNLVASLLAHKLGVTQCTIAHALEKTKYPDSDIYWKKLDEKYHFSCQFTADLIAMNHTDFIITSTFQEIAGSKDTVGQYESHRSFTLPGLYRVVHGIDVFDPKFNIVSPGADMSIYFAYTEEKRRLTAFHLEIEELLYSDVENEEHLCVLKDKKKPIIFTMARLDRVKNLSGLVEWYGKNTRLRELVNLVVVGGDRRKESQDNEEKAEMKKMYELIEEYKLNGQFRWISSQMNRVRNGELYRYICDTKGAFVQPALYEAFGLTVVEAMTCGLPTFATCNGGPAEIIVHGKSGFHIDPYHGDKAAESLADFFTKCKHDPSHWDQISLGGLERIQEKYTWQIYSQRLLTLTGVYGFWKHVSNLDRLESRRYLEMFYALKYRPLAQAVPLAHEE.

Positions 277–754 are GT-B glycosyltransferase; it reads MVFNVVILSP…GLERIQEKYT (478 aa).

This sequence belongs to the glycosyltransferase 1 family. Plant sucrose synthase subfamily. In terms of tissue distribution, detected in the whole plant with highest expression in young rosette leaves and roots.

It carries out the reaction an NDP-alpha-D-glucose + D-fructose = a ribonucleoside 5'-diphosphate + sucrose + H(+). Sucrose-cleaving enzyme that provides UDP-glucose and fructose for various metabolic pathways. The chain is Sucrose synthase 4 (SUS4) from Arabidopsis thaliana (Mouse-ear cress).